The primary structure comprises 254 residues: Probable glutathione transferase omega-2 (254 aa).

The 81-residue stretch at 25–105 folds into the GST N-terminal domain; sequence GTIRIYNMRY…YLDDIYPEPR (81 aa). Residue cysteine 35 is the Nucleophile of the active site. Glutathione contacts are provided by residues lysine 62, valine 75, and 89-90; that span reads ES. Residues 110–239 enclose the GST C-terminal domain; the sequence is DHYEKVQQKL…SQPTETAVEF (130 aa).

The protein belongs to the GST superfamily. Omega family.

It catalyses the reaction RX + glutathione = an S-substituted glutathione + a halide anion + H(+). It carries out the reaction L-dehydroascorbate + 2 glutathione = glutathione disulfide + L-ascorbate. The catalysed reaction is methylarsonate + 2 glutathione + H(+) = methylarsonous acid + glutathione disulfide + H2O. Exhibits glutathione-dependent thiol transferase activity. Has dehydroascorbate reductase activity and may contribute to the recycling of ascorbic acid. Participates in the biotransformation of inorganic arsenic and reduces monomethylarsonic acid (MMA). The protein is Probable glutathione transferase omega-2 (gsto-2) of Caenorhabditis elegans.